Reading from the N-terminus, the 202-residue chain is Large ribosomal subunit protein uL18 (202 aa).

It belongs to the universal ribosomal protein uL18 family. In terms of assembly, part of the 50S ribosomal subunit. Contacts the 5S and 23S rRNAs.

Its function is as follows. This is one of the proteins that bind and probably mediate the attachment of the 5S RNA into the large ribosomal subunit, where it forms part of the central protuberance. This is Large ribosomal subunit protein uL18 from Staphylothermus marinus (strain ATCC 43588 / DSM 3639 / JCM 9404 / F1).